Reading from the N-terminus, the 402-residue chain is Peptidyl-prolyl cis-trans isomerase FKBP8 (402 aa).

Positions 28–39 (DGVDDAEEEDDL) are enriched in acidic residues. Residues 28 to 54 (DGVDDAEEEDDLSGLPPLEDMGQPTVE) are disordered. In terms of domain architecture, PPIase FKBP-type spans 110 to 194 (GQVVTVHLQM…CLEVTLKTAE (85 aa)). Residues 211-244 (ANRKRECGNAHYQRADFVLAANSYDLAIKAITSN) form a TPR 1 repeat. Glycyl lysine isopeptide (Lys-Gly) (interchain with G-Cter in ubiquitin) cross-links involve residues Lys239, Lys261, Lys263, and Lys274. TPR repeat units follow at residues 262 to 295 (VKCL…QPDN) and 296 to 329 (IKAL…EPSN). Ser286 carries the post-translational modification Phosphoserine. Glycyl lysine isopeptide (Lys-Gly) (interchain with G-Cter in ubiquitin) cross-links involve residues Lys297, Lys304, Lys324, Lys330, Lys338, Lys341, and Lys342. Residues 380 to 400 (WLFGATAVALGGVALSVVIAA) traverse the membrane as a helical segment.

In terms of assembly, homomultimers or heteromultimers (Potential). Forms heterodimer with calmodulin. When activated by calmodulin and calcium, interacts with the BH4 domain of BCL2 and weakly with BCLX isoform Bcl-X(L). Does not bind and inhibit calcineurin. Interacts with ZFYVE27; may negatively regulate ZFYVE27 phosphorylation. It depends on Ca(2+) as a cofactor. Ubiquitinated by PRKN during mitophagy, leading to its degradation and enhancement of mitophagy. Deubiquitinated by USP30. In terms of tissue distribution, detected throughout the embryonic body, in caudal neural tube, limbs and head. Detected in adult retina, brain, heart, kidney, liver, pancreas, lung, testis and urinary bladder (at protein level). Detected in adult brain, kidney, liver, testis and trigeminal nerve, and in embryo. Detected at lower levels in lung, spleen, heart and ovary. Widely expressed in forebrain. Detected in the Purkinje cell layer in the cerebellum and in hippocampus neurons.

It localises to the mitochondrion membrane. The catalysed reaction is [protein]-peptidylproline (omega=180) = [protein]-peptidylproline (omega=0). Its function is as follows. Constitutively inactive PPiase, which becomes active when bound to calmodulin and calcium. Seems to act as a chaperone for BCL2, targets it to the mitochondria and modulates its phosphorylation state. The BCL2/FKBP8/calmodulin/calcium complex probably interferes with the binding of BCL2 to its targets. The active form of FKBP8 may therefore play a role in the regulation of apoptosis. Required for normal embryonic development. This Mus musculus (Mouse) protein is Peptidyl-prolyl cis-trans isomerase FKBP8 (Fkbp8).